Consider the following 361-residue polypeptide: Deoxyribonuclease-2-beta (361 aa).

The N-terminal stretch at 1-27 (MKQKMMARLLRTSFALLFLGLFGVLGA) is a signal peptide. 4 N-linked (GlcNAc...) asparagine glycosylation sites follow: asparagine 81, asparagine 103, asparagine 119, and asparagine 278.

It belongs to the DNase II family. Highly expressed in the eye lens and in salivary gland. Detected at lower levels in lung, prostate and lymph node. Isoform 2 is lung specific.

The protein resides in the lysosome. The catalysed reaction is Endonucleolytic cleavage to nucleoside 3'-phosphates and 3'-phosphooligonucleotide end-products.. In terms of biological role, hydrolyzes DNA under acidic conditions. Does not require divalent cations for activity. Participates in the degradation of nuclear DNA during lens cell differentiation. The chain is Deoxyribonuclease-2-beta (DNASE2B) from Homo sapiens (Human).